Here is a 227-residue protein sequence, read N- to C-terminus: Cleavage and polyadenylation specificity factor subunit 5 (227 aa).

Residues 76–201 enclose the Nudix hydrolase domain; that stretch reads MRRTVEGVLI…KLVAAPLFEL (126 aa). Residues 102–104 form an interaction with RNA region; that stretch reads TFF. Residues 109 to 130 carry the Nudix box motif; sequence GELNPGEDEVEGLKRLMTEILG.

Belongs to the Nudix hydrolase family. CPSF5 subfamily. Homodimer (via N- and C-terminus); binds RNA as homodimer. Component of the cleavage factor Im (CFIm) complex.

It localises to the nucleus. It is found in the cytoplasm. Its function is as follows. Component of the cleavage factor Im (CFIm) complex that functions as an activator of the pre-mRNA 3'-end cleavage and polyadenylation processing required for the maturation of pre-mRNA into functional mRNAs. CFIm contributes to the recruitment of multiprotein complexes on specific sequences on the pre-mRNA 3'-end, so called cleavage and polyadenylation signals (pA signals). Most pre-mRNAs contain multiple pA signals, resulting in alternative cleavage and polyadenylation (APA) producing mRNAs with variable 3'-end formation. The CFIm complex acts as a key regulator of cleavage and polyadenylation site choice during APA through its binding to 5'-UGUA-3' elements localized in the 3'-untranslated region (UTR) for a huge number of pre-mRNAs. Binds to 5'-UGUA-3' elements localized upstream of pA signals that act as enhancers of pre-mRNA 3'-end processing. The homodimer mediates simultaneous sequence-specific recognition of two 5'-UGUA-3' elements within the pre-mRNA. Plays a role in somatic cell fate transitions and pluripotency by regulating widespread changes in gene expression through an APA-dependent function. Binds to chromatin. Binds to, but does not hydrolyze mono- and di-adenosine nucleotides. The protein is Cleavage and polyadenylation specificity factor subunit 5 of Xenopus laevis (African clawed frog).